The sequence spans 624 residues: Ceramide transfer protein (624 aa).

Positions M1–G11 are enriched in polar residues. Residues M1–V24 form a disordered region. A PH domain is found at P23–T117. Position 126 is a phosphoserine (S126). At S132 the chain carries Phosphoserine; by PKD. At S135 the chain carries Phosphoserine. The stretch at I263 to H303 forms a coiled coil. A Phosphoserine modification is found at S315. The FFAT motif lies at E321 to E327. Y372 carries the post-translational modification Phosphotyrosine. A phosphoserine mark is found at S373, S377, and S380. An START domain is found at D389–A618. An N-acylsphing-4-enine contacts are provided by E472, Q493, N530, and Y579.

In terms of assembly, interacts with VAPA and VAPB. Interaction with VAPB is less efficient than with VAPA. Interacts (via FFAT motif) with the MOSPD2 (via MSP domain). Phosphorylation on Ser-132 decreases the affinity toward phosphatidylinositol 4-phosphate at Golgi membranes and reduces ceramide transfer activity. Inactivated by hyperphosphorylation of serine residues by CSNK1G2/CK1 that triggers dissociation from the Golgi complex, thus down-regulating ER-to-Golgi transport of ceramide and sphingomyelin synthesis.

The protein resides in the cytoplasm. Its subcellular location is the golgi apparatus. It is found in the endoplasmic reticulum. It catalyses the reaction N-hexadecanoylsphing-4-enine(in) = N-hexadecanoylsphing-4-enine(out). In terms of biological role, shelters ceramides and diacylglycerol lipids inside its START domain and mediates the intracellular trafficking of ceramides and diacylglycerol lipids in a non-vesicular manner. This is Ceramide transfer protein (CERT1) from Pongo abelii (Sumatran orangutan).